The chain runs to 185 residues: Ribosome-recycling factor (185 aa).

Belongs to the RRF family.

The protein localises to the cytoplasm. Its function is as follows. Responsible for the release of ribosomes from messenger RNA at the termination of protein biosynthesis. May increase the efficiency of translation by recycling ribosomes from one round of translation to another. The chain is Ribosome-recycling factor from Shewanella baltica (strain OS185).